A 178-amino-acid polypeptide reads, in one-letter code: Large ribosomal subunit protein uL6 (178 aa).

Belongs to the universal ribosomal protein uL6 family. In terms of assembly, part of the 50S ribosomal subunit.

Its function is as follows. This protein binds to the 23S rRNA, and is important in its secondary structure. It is located near the subunit interface in the base of the L7/L12 stalk, and near the tRNA binding site of the peptidyltransferase center. The protein is Large ribosomal subunit protein uL6 of Campylobacter lari (strain RM2100 / D67 / ATCC BAA-1060).